The chain runs to 612 residues: Autophagy-related protein 28 (612 aa).

A disordered region spans residues 44–72 (NHMEEQSPKFESSFPRRTSEGPVDDVGKS). Residues 214–296 (YQAKAQDKQA…QRTLKNECFQ (83 aa)) adopt a coiled-coil conformation.

It belongs to the ATG28 family. Interacts with ATG35.

The protein localises to the cytoplasm. Its subcellular location is the vacuole membrane. It localises to the cytoplasmic vesicle membrane. In terms of biological role, required for the autophagic degradation of peroxisomes called pexophagy, but not essential for general autophagy. Involved in resistance to elevated pH. This Komagataella phaffii (strain GS115 / ATCC 20864) (Yeast) protein is Autophagy-related protein 28 (ATG28).